A 337-amino-acid polypeptide reads, in one-letter code: Cytoskeleton protein RodZ (337 aa).

Over 1 to 111 (MNTEATHDQN…LGKRRKKRDG (111 aa)) the chain is Cytoplasmic. Residues 19-71 (LRNAREQLGLSQQAVAERLCLKVSTVRDIEEDKAPADLASTFLRGYIRSYARL) form the HTH cro/C1-type domain. The H-T-H motif DNA-binding region spans 30–49 (QQAVAERLCLKVSTVRDIEE). Residues 112–132 (WLMTFTWLVLFVVIGLSGAWW) form a helical; Signal-anchor for type II membrane protein membrane-spanning segment. The Periplasmic portion of the chain corresponds to 133-337 (WQDRKAQQEE…TLNAEQSPAQ (205 aa)). Residues 144–167 (TTMADQSSAELSSNSEQGQSVPLN) are compositionally biased toward polar residues. Residues 144–235 (TTMADQSSAE…PTAATTPDGA (92 aa)) are disordered. A compositionally biased stretch (low complexity) spans 168–207 (TSTTTDPATTSTPPASVDTTATNTQTPAVTAPAPAVDPQQ). The segment covering 208-218 (NAVVSPSQANV) has biased composition (polar residues). A compositionally biased stretch (low complexity) spans 219–235 (DTAATPAPTAATTPDGA).

The protein belongs to the RodZ family.

The protein localises to the cell inner membrane. Its function is as follows. Cytoskeletal protein that is involved in cell-shape control through regulation of the length of the long axis. This chain is Cytoskeleton protein RodZ, found in Escherichia coli (strain K12 / MC4100 / BW2952).